A 565-amino-acid chain; its full sequence is Deformed epidermal autoregulatory factor 1 homolog (565 aa).

Disordered stretches follow at residues 34–62 and 162–190; these read GGEA…ETPR and GLKG…KGGT. Over residues 169 to 181 the composition is skewed to pro residues; it reads PLTPGPQSPPTPL. Thr-171 carries the phosphothreonine modification. Residue Ser-176 is modified to Phosphoserine. Position 179 is a phosphothreonine (Thr-179). In terms of domain architecture, SAND spans 193-273; that stretch reads NWDPSVYDSE…QCLIQDGILN (81 aa). The Nuclear localization signal signature appears at 301–316; that stretch reads KRRKKENELPTTPVKK. The interaction with LMO4 stretch occupies residues 403-478; sequence IAPFPEAALP…QLKTLFEQAK (76 aa). Thr-432 bears the Phosphothreonine mark. Phosphoserine is present on Ser-448. 8 residues coordinate Zn(2+): Cys-504, Cys-507, Cys-515, Cys-518, Cys-524, Cys-528, His-536, and Cys-540. The MYND-type zinc-finger motif lies at 504–540; that stretch reads CVNCGREAMNECTGCHKVNYCSTFCQRKDWKDHQHIC.

In terms of assembly, homodimer. Interacts with LMO4; LMO4 blocks export from nucleus. Interacts with LMO2 and CLIM2. May interact with the corepressors NCOR1 and NCRO2. Identified in a complex with XRCC5 and XRCC6. Interacts (via the SAND domain) with the DNA-PK complex subunit XRCC6; the interaction is direct and may be inhibited by DNA-binding. Post-translationally, may be phosphorylated by DNA-PK complex in a DNA independent manner (in vitro).

Its subcellular location is the nucleus. Transcription factor that binds to sequence with multiple copies of 5'-TTC[CG]G-3' present in its own promoter and that of the HNRPA2B1 gene. Down-regulates transcription of these genes. Binds to the retinoic acid response element (RARE) 5'-AGGGTTCACCGAAAGTTCA-3'. Activates the proenkephalin gene independently of promoter binding, probably through protein-protein interaction. Regulates epithelial cell proliferation and side-branching in the mammary gland. Required for neural tube closure and skeletal patterning. Controls the expression of peripheral tissue antigens in pancreatic lymph nodes. Transcriptional activator of EIF4G3. May also involved in behavior. The sequence is that of Deformed epidermal autoregulatory factor 1 homolog (DEAF1) from Pan troglodytes (Chimpanzee).